The primary structure comprises 127 residues: NHP2-like protein 1 homolog (127 aa).

Belongs to the eukaryotic ribosomal protein eL8 family.

The protein resides in the nucleus. It localises to the nucleolus. Functionally, binds to the 5'-stem-loop of U4 snRNA and may play a role in the late stage of spliceosome assembly. The protein undergoes a conformational change upon RNA-binding. This Drosophila melanogaster (Fruit fly) protein is NHP2-like protein 1 homolog (hoip).